The following is a 224-amino-acid chain: TBP-related factor (224 aa).

The disordered stretch occupies residues arginine 14–glutamine 34. Residues valine 17–glutamine 34 are compositionally biased toward low complexity. 2 repeat units span residues leucine 51–leucine 127 and leucine 141–leucine 218.

Belongs to the TBP family. In terms of tissue distribution, primary spermatocytes in the adult testis and in a subset of cells in the dorsal medial region of the embryonic CNS.

The protein resides in the nucleus. Its function is as follows. Acts as a transcription factor. Binds to the TATA box promoter element which lies close to the position of transcription initiation. Functionally, may be essential for embryonic development. The polypeptide is TBP-related factor (Trf) (Drosophila melanogaster (Fruit fly)).